The sequence spans 477 residues: Histidine permease HisP (477 aa).

12 helical membrane passes run 16–36, 40–60, 86–106, 126–146, 156–176, 192–212, 238–258, 284–304, 337–359, 364–386, 408–428, and 437–457; these read ITMIALGGTIGTGLFLTSGAT, AGPWGAVLAYCFIGIMVYFVM, PAFGFALGWNYWLNGAITIAV, IFSGIATVLIFIINVMAVGAF, IKVITIVLFLAIGLLTIFGVL, HGFVGGISGFVGVLLIAGFSF, SIFWRILLFYIFSIIVIAAII, IGFAVAASVMNAVILTSVISS, IPFYALLATTIICFIAFLTGIFG, LFLIDLSSLTGFLAWLGISVSHI, WFPFGPIVALLMTGAIAINLD, and WGEGLALYAAIPIFIVLYFGY.

This sequence belongs to the amino acid-polyamine-organocation (APC) superfamily. Amino acid transporter (AAT) (TC 2.A.3.1) family.

The protein localises to the cell membrane. Functionally, involved in histidine uptake. Has low affinity for arginine and lysine. Plays no significant role in the excretion of accumulated histidine. The chain is Histidine permease HisP from Lactococcus lactis subsp. cremoris (strain MG1363).